The primary structure comprises 217 residues: Deoxyribose-phosphate aldolase (217 aa).

D90 serves as the catalytic Proton donor/acceptor. K152 functions as the Schiff-base intermediate with acetaldehyde in the catalytic mechanism. K181 serves as the catalytic Proton donor/acceptor.

Belongs to the DeoC/FbaB aldolase family. DeoC type 1 subfamily.

The protein localises to the cytoplasm. It carries out the reaction 2-deoxy-D-ribose 5-phosphate = D-glyceraldehyde 3-phosphate + acetaldehyde. The protein operates within carbohydrate degradation; 2-deoxy-D-ribose 1-phosphate degradation; D-glyceraldehyde 3-phosphate and acetaldehyde from 2-deoxy-alpha-D-ribose 1-phosphate: step 2/2. Functionally, catalyzes a reversible aldol reaction between acetaldehyde and D-glyceraldehyde 3-phosphate to generate 2-deoxy-D-ribose 5-phosphate. This Metamycoplasma hominis (Mycoplasma hominis) protein is Deoxyribose-phosphate aldolase.